The chain runs to 439 residues: ATP-dependent protease ATPase subunit HslU (439 aa).

ATP is bound by residues I17, 59–64 (GVGKTE), D251, E317, and R389.

Belongs to the ClpX chaperone family. HslU subfamily. In terms of assembly, a double ring-shaped homohexamer of HslV is capped on each side by a ring-shaped HslU homohexamer. The assembly of the HslU/HslV complex is dependent on binding of ATP.

The protein localises to the cytoplasm. ATPase subunit of a proteasome-like degradation complex; this subunit has chaperone activity. The binding of ATP and its subsequent hydrolysis by HslU are essential for unfolding of protein substrates subsequently hydrolyzed by HslV. HslU recognizes the N-terminal part of its protein substrates and unfolds these before they are guided to HslV for hydrolysis. This Campylobacter jejuni subsp. jejuni serotype O:23/36 (strain 81-176) protein is ATP-dependent protease ATPase subunit HslU.